A 288-amino-acid chain; its full sequence is Hydroxyethylthiazole kinase (288 aa).

Met55 serves as a coordination point for substrate. ATP is bound by residues Asn131 and Ser177. Gly204 provides a ligand contact to substrate.

It belongs to the Thz kinase family. Requires Mg(2+) as cofactor.

The catalysed reaction is 5-(2-hydroxyethyl)-4-methylthiazole + ATP = 4-methyl-5-(2-phosphooxyethyl)-thiazole + ADP + H(+). It participates in cofactor biosynthesis; thiamine diphosphate biosynthesis; 4-methyl-5-(2-phosphoethyl)-thiazole from 5-(2-hydroxyethyl)-4-methylthiazole: step 1/1. Catalyzes the phosphorylation of the hydroxyl group of 4-methyl-5-beta-hydroxyethylthiazole (THZ). The protein is Hydroxyethylthiazole kinase of Haloquadratum walsbyi (strain DSM 16790 / HBSQ001).